A 207-amino-acid polypeptide reads, in one-letter code: Probable molybdenum cofactor guanylyltransferase (207 aa).

GTP-binding positions include 9-11 (LAG), K21, and D97. Mg(2+) is bound at residue D97.

The protein belongs to the MobA family. Mg(2+) is required as a cofactor.

The protein resides in the cytoplasm. It carries out the reaction Mo-molybdopterin + GTP + H(+) = Mo-molybdopterin guanine dinucleotide + diphosphate. Transfers a GMP moiety from GTP to Mo-molybdopterin (Mo-MPT) cofactor (Moco or molybdenum cofactor) to form Mo-molybdopterin guanine dinucleotide (Mo-MGD) cofactor. In Trichormus variabilis (strain ATCC 29413 / PCC 7937) (Anabaena variabilis), this protein is Probable molybdenum cofactor guanylyltransferase.